A 130-amino-acid polypeptide reads, in one-letter code: Small ribosomal subunit protein uS8 (130 aa).

It belongs to the universal ribosomal protein uS8 family. As to quaternary structure, part of the 30S ribosomal subunit.

In terms of biological role, one of the primary rRNA binding proteins, it binds directly to 16S rRNA central domain where it helps coordinate assembly of the platform of the 30S subunit. This Pyrobaculum islandicum (strain DSM 4184 / JCM 9189 / GEO3) protein is Small ribosomal subunit protein uS8.